A 186-amino-acid polypeptide reads, in one-letter code: Cell division protein SepF (186 aa).

The tract at residues 24 to 91 (EDEEEEERYA…HNPPHLRAVP (68 aa)) is disordered.

This sequence belongs to the SepF family. Homodimer. Interacts with FtsZ.

Its subcellular location is the cytoplasm. Functionally, cell division protein that is part of the divisome complex and is recruited early to the Z-ring. Probably stimulates Z-ring formation, perhaps through the cross-linking of FtsZ protofilaments. Its function overlaps with FtsA. This Rubrobacter xylanophilus (strain DSM 9941 / JCM 11954 / NBRC 16129 / PRD-1) protein is Cell division protein SepF.